A 444-amino-acid polypeptide reads, in one-letter code: METAIEDAGLDRGPTLTSSWDAACGALTQSLFLTRTGPRAQDLDFEQLLEPPAPSQDPVSLKSSLSPRDENPCFIYLNCGPNGGEEILSVGVLSSARNMEVYLGEEYCGTSRGKTACTVLDDSEHEKILLYKKYLKLDSPTHACKIKLLSFGEKQCVLVSKVVVHLRPRSADPSPRSAALGSRIDLDNIQTIMESMGSRLSPGAQQLMSMIRFQQQNRLPIGDQLQSVLGSAGHKHLMALQSSPSPAVLDKASSTPFPFRTGLTPSAITENLKALIDKSAQPSGEGNTTNHDEGHLMPQNHSLESDLKNAVSSFLPKKASGSSSVPSSELLPFLQNLCSQVNHLRVGHNARWQENISKPREGMVGVPMEEQPVCSYLEKILSKNMELMEKKLMDHIDERIYQLQEHIDAKMALLVDLLRGPNSPPPGMPLRHYDSRERLSNGER.

Phosphoserine is present on residues serine 177, serine 182, and serine 254. The segment at 279-300 (SAQPSGEGNTTNHDEGHLMPQN) is disordered. Residues 280 to 289 (AQPSGEGNTT) are compositionally biased toward polar residues. Serine 302 bears the Phosphoserine mark. The interval 424 to 444 (PPPGMPLRHYDSRERLSNGER) is disordered. A compositionally biased stretch (basic and acidic residues) spans 431–444 (RHYDSRERLSNGER).

In terms of assembly, homodimer. Interacts with ABCB7, ABCB8/MITOSUR and ABCB10.

Its subcellular location is the cytoplasm. The protein localises to the mitochondrion. It catalyses the reaction ATP + H2O = ADP + phosphate + H(+). Functionally, ATPase that regulates mitochondrial ABC transporters ABCB7, ABCB8/MITOSUR and ABCB10. Regulates mitochondrial ferric concentration and heme biosynthesis and plays a role in the maintenance of mitochondrial homeostasis and cell survival. This chain is ATPase PAAT, found in Mus musculus (Mouse).